Here is a 767-residue protein sequence, read N- to C-terminus: Two-component response regulator-like PRR73 (767 aa).

The tract at residues 1–64 is disordered; it reads MGSACEAGTD…EPQQTDEQKE (64 aa). The region spanning 82-200 is the Response regulatory domain; sequence RVLLVENDDS…ELKNLWQHVW (119 aa). The span at 205-214 shows a compositional bias: low complexity; sequence SSSGSGSESG. 5 disordered regions span residues 205–272, 312–388, 476–546, 646–701, and 727–767; these read SSSG…QSSW, RWLP…NEPT, ASNQ…RGKV, ANYS…SGSG, and NFGK…DEDR. The span at 238–252 shows a compositional bias: acidic residues; the sequence is DNEDDDDNDEDDDDL. Composition is skewed to polar residues over residues 263 to 272, 343 to 361, and 488 to 497; these read DNGSGTQSSW, RNSS…VNPT, and CSPQDNSSEA. Residues 518 to 531 are compositionally biased toward low complexity; sequence GSNGSSNNNDMGSS. Over residues 532–543 the composition is skewed to polar residues; that stretch reads TKNAITKPSSNR. The span at 689–700 shows a compositional bias: gly residues; sequence GAGGGNGSGSGS. Residues 712–754 form the CCT domain; the sequence is REAALNKFRQKRKVRNFGKKVRYQSRKRLAEQRPRIRGQFVRQ. The segment covering 727 to 738 has biased composition (basic residues); the sequence is NFGKKVRYQSRK.

Belongs to the ARR-like family.

The protein resides in the nucleus. Its function is as follows. Controls photoperiodic flowering response. Seems to be one of the component of the circadian clock. Expression of several members of the ARR-like family is controlled by circadian rhythm. The particular coordinated sequential expression of PRR73, PRR37, PRR95, PRR59 and PPR1 result to circadian waves that may be at the basis of the endogenous circadian clock. The protein is Two-component response regulator-like PRR73 (PRR73) of Oryza sativa subsp. japonica (Rice).